Consider the following 386-residue polypeptide: Glutamate 5-kinase (386 aa).

Residue Lys-28 participates in ATP binding. Positions 68, 155, and 167 each coordinate substrate. 187–188 serves as a coordination point for ATP; the sequence is TD. The PUA domain maps to 294–372; that stretch reads RGRLVLDDGA…EKIESILGYI (79 aa).

The protein belongs to the glutamate 5-kinase family.

The protein resides in the cytoplasm. The catalysed reaction is L-glutamate + ATP = L-glutamyl 5-phosphate + ADP. The protein operates within amino-acid biosynthesis; L-proline biosynthesis; L-glutamate 5-semialdehyde from L-glutamate: step 1/2. In terms of biological role, catalyzes the transfer of a phosphate group to glutamate to form L-glutamate 5-phosphate. The sequence is that of Glutamate 5-kinase from Hahella chejuensis (strain KCTC 2396).